The sequence spans 108 residues: Tubulin-specific chaperone A (108 aa).

A2 is modified (N-acetylalanine).

Belongs to the TBCA family. In terms of assembly, supercomplex made of cofactors A to E. Cofactors A and D function by capturing and stabilizing tubulin in a quasi-native conformation. Cofactor E binds to the cofactor D-tubulin complex; interaction with cofactor C then causes the release of tubulin polypeptides that are committed to the native state.

Its subcellular location is the cytoplasm. The protein resides in the cytoskeleton. Functionally, tubulin-folding protein; involved in the early step of the tubulin folding pathway. This is Tubulin-specific chaperone A (TBCA) from Oryctolagus cuniculus (Rabbit).